The primary structure comprises 335 residues: Tetraacyldisaccharide 4'-kinase (335 aa).

58-65 is an ATP binding site; it reads TVGGSGKT.

Belongs to the LpxK family.

The catalysed reaction is a lipid A disaccharide + ATP = a lipid IVA + ADP + H(+). It functions in the pathway glycolipid biosynthesis; lipid IV(A) biosynthesis; lipid IV(A) from (3R)-3-hydroxytetradecanoyl-[acyl-carrier-protein] and UDP-N-acetyl-alpha-D-glucosamine: step 6/6. Functionally, transfers the gamma-phosphate of ATP to the 4'-position of a tetraacyldisaccharide 1-phosphate intermediate (termed DS-1-P) to form tetraacyldisaccharide 1,4'-bis-phosphate (lipid IVA). This chain is Tetraacyldisaccharide 4'-kinase, found in Shewanella sp. (strain ANA-3).